We begin with the raw amino-acid sequence, 1300 residues long: Insulin receptor-related protein (1300 aa).

The N-terminal stretch at 1–26 (MAVPALWPWGVHLLMSLLSLGSGLDT) is a signal peptide. N-linked (GlcNAc...) asparagine glycosylation is found at Asn-47 and Asn-100. Disulfide bonds link Cys-214–Cys-222, Cys-216–Cys-228, Cys-229–Cys-237, Cys-233–Cys-246, Cys-249–Cys-258, Cys-262–Cys-274, Cys-280–Cys-300, Cys-304–Cys-317, and Cys-320–Cys-324. A glycan (N-linked (GlcNAc...) asparagine) is linked at Asn-311. N-linked (GlcNAc...) asparagine glycosylation is found at Asn-411, Asn-492, Asn-528, Asn-616, Asn-634, Asn-756, Asn-885, and Asn-898. 2 consecutive Fibronectin type-III domains span residues 483 to 603 (QTRT…TLPA) and 607 to 707 (VPQD…AQEV). Cys-657 and Cys-864 are oxidised to a cystine. At 747-921 (EAGLLRLGKN…LEEEDTGGMR (175 aa)) the chain is on the extracellular side. The region spanning 818–913 (IPGKVAWKAA…GVTFYITDLE (96 aa)) is the Fibronectin type-III 3 domain. Residues 922-943 (IFLTVTPVGFMLLVTLAALGFF) traverse the membrane as a helical segment. Topologically, residues 944–1300 (YSRKRNSTLY…YSAPNGGPGH (357 aa)) are cytoplasmic. Residues 979-1254 (IAIIRELGQG…RIQDELRPSF (276 aa)) enclose the Protein kinase domain. ATP contacts are provided by residues 985–993 (LGQGSFGMV) and Lys-1013. The Proton acceptor role is filled by Asp-1115. Phosphotyrosine; by autocatalysis occurs at positions 1145 and 1146. Residues 1273–1300 (LPTEAEPDSPPTLNGASDYSAPNGGPGH) are disordered.

The protein belongs to the protein kinase superfamily. Tyr protein kinase family. Insulin receptor subfamily. As to quaternary structure, probable tetramer of 2 alpha and 2 beta chains linked by disulfide bonds. The alpha chains contribute to the formation of the ligand-binding domain, while the beta chains carry the kinase domain. Autophosphorylated on tyrosine residues between pH 7.9 and pH 10.5. Highly expressed in the islets as well as in pancreatic beta-cells.

The protein resides in the membrane. It carries out the reaction L-tyrosyl-[protein] + ATP = O-phospho-L-tyrosyl-[protein] + ADP + H(+). In terms of biological role, receptor with tyrosine-protein kinase activity. Functions as a pH sensing receptor which is activated by increased extracellular pH. Activates an intracellular signaling pathway that involves IRS1 and AKT1/PKB. The polypeptide is Insulin receptor-related protein (Insrr) (Mus musculus (Mouse)).